A 295-amino-acid chain; its full sequence is Glycine--tRNA ligase alpha subunit (295 aa).

The protein belongs to the class-II aminoacyl-tRNA synthetase family. Tetramer of two alpha and two beta subunits.

It is found in the cytoplasm. The enzyme catalyses tRNA(Gly) + glycine + ATP = glycyl-tRNA(Gly) + AMP + diphosphate. In Bacillus subtilis (strain 168), this protein is Glycine--tRNA ligase alpha subunit (glyQ).